Here is a 563-residue protein sequence, read N- to C-terminus: Cytochrome P450 monooxygenase phqL (563 aa).

Helical transmembrane passes span 20 to 40, 52 to 72, and 80 to 100; these read ENFS…IIIF, IPVG…FVPG, and ALWL…VSIL. Asn-279 carries an N-linked (GlcNAc...) asparagine glycan. The chain crosses the membrane as a helical span at residues 362-382; the sequence is LVIFAGSGTVAVTIIGCLYFL. N-linked (GlcNAc...) asparagine glycosylation is present at Asn-419. Heme is bound at residue Cys-502.

It belongs to the cytochrome P450 family. The cofactor is heme.

Its subcellular location is the membrane. It functions in the pathway alkaloid biosynthesis. Its function is as follows. Cytochrome P450 monooxygenase; part of the gene cluster that mediates the biosynthesis of paraherquamide, a fungal indole alkaloid that belongs to a family of natural products containing a characteristic bicyclo[2.2.2]diazaoctane core. The first steps in the biosynthesis of paraherquamide is the production of the beta-methyl-proline precursor from L-isoleucine. They require oxidation of a terminally hydroxylated L-isoleucine to the corresponding aldehyde by enzymes which have still to be identified. Spontaneous cyclization and dehydration would yield the 4-methyl pyrolline-5-carboxylic acid, which is then reduced by the pyrroline-5-carboxylate reductase phqD leading to the beta-methyl-proline precursor. The next step of paraherquamide biosynthesis involves coupling of beta-methyl-proline and L-tryptophan by the bimodular NRPS phqB, to produce a monooxopiperazine intermediate. The reductase (R) domain of phqB utilizes NADPH for hydride transfer to reduce the thioester bond of the T domain-tethered linear dipeptide to a hemithioaminal intermediate, which spontaneously cleaves the C-S bond to release the aldehyde product. This compound undergoes spontaneous cyclization and dehydration to give a dienamine which is reverse prenylated at C-2 by the reverse prenyltransferase phqJ. The other prenyltransferase present in the cluster, phqI may be a redundant gene in the pathway. During biosynthetic assembly, the key step to produce the polycyclic core is catalyzed by the bifunctional reductase and intramolecular [4+2] Diels-Alderase, phqE, resulting in formation of the [2.2.2] diazaoctane intermediate preparaherquamide. Following formation of preparaherquamide, an indole 2,3-epoxidation-initiated pinacol-like rearrangement is catalyzed by the phqK FAD-dependent monooxygenase. The prenyltransferase phqA, the cytochrome P450 monooxygenase phqL, and the FAD-linked oxidoreductase phqH (or the cytochrome P450 monooxygenase phqM), are proposed to be involved in the formation of the pyran ring. The FAD-dependent monooxygenase phqK is likely responsible for generation of the spiro-oxindole, and the N-methylation is likely mediated by the phqN methyltransferase leading to the isolable natural product paraherquamide F. However, the order of these biosynthetic steps has still to be determined. In late-stage paraherquamide biosynthesis, the third P450 monooxygenase, phqO, is probably responsible for the C-14 hydroxylation, transforming paraherquamide F to paraherquamide G, and paraherquamide E to the final product paraherquamide A. The expansion from the 6-membered ring pyran (in paraherquamides F and G) to the 7-membered dioxepin ring (in paraherquamides A and E) represents a poorly understood but intriguing process that probably involves the 2-oxoglutarate-dependent dioxygenase phqC. Finally, the remaining members of the paraherquamide cluster, including phqI as well as phqM (or phqH), do not have a clearly prescribed role and appear to be redundant. In Penicillium fellutanum, this protein is Cytochrome P450 monooxygenase phqL.